Consider the following 549-residue polypeptide: Putative lipase ATG15 (549 aa).

The Cytoplasmic segment spans residues 1-19 (MKQDLYKESSPPPSTTKSK). Residues 20-42 (GLYVIVAALVTTAIYLLYSQGYS) traverse the membrane as a helical; Signal-anchor for type II membrane protein segment. Residues 43 to 549 (NTHGEKDMPS…SHTVTHVTMA (507 aa)) are Lumenal-facing. N204 and N315 each carry an N-linked (GlcNAc...) asparagine glycan. Residue S331 is the Charge relay system of the active site. N448 carries an N-linked (GlcNAc...) asparagine glycan. Positions 474–510 (DDDDKDKKKKKKTSTSSSVVSKTKTSTSSTVATNTMP) are disordered. Residues 487 to 504 (STSSSVVSKTKTSTSSTV) show a composition bias toward low complexity.

The protein belongs to the AB hydrolase superfamily. Lipase family. Binds to both phosphatidylinositol (PI) and phosphatidylinositol 3,5-bisphosphate (PIP2).

It localises to the endosome. Its subcellular location is the multivesicular body membrane. The protein resides in the prevacuolar compartment membrane. It catalyses the reaction a triacylglycerol + H2O = a diacylglycerol + a fatty acid + H(+). Lipase which is essential for lysis of subvacuolar cytoplasm to vacuole targeted bodies and intravacuolar autophagic bodies. Involved in the lysis of intravacuolar multivesicular body (MVB) vesicles. The intravacuolar membrane disintegration by ATG15 is critical to life span extension. This is Putative lipase ATG15 (ATG15) from Yarrowia lipolytica (strain CLIB 122 / E 150) (Yeast).